A 281-amino-acid polypeptide reads, in one-letter code: Protoheme IX farnesyltransferase (281 aa).

The next 9 membrane-spanning stretches (helical) occupy residues 16 to 36, 38 to 58, 75 to 95, 101 to 121, 129 to 149, 150 to 170, 202 to 224, 228 to 250, and 261 to 281; these read TFLL…GADF, FVIA…INMW, VPAG…IFAI, FLVS…DIVV, KSPY…LGGW, VAVQ…LLWI, ASWA…YVLL, IFYL…KFAL, and YKLA…GVFL.

It belongs to the UbiA prenyltransferase family. Protoheme IX farnesyltransferase subfamily.

The protein localises to the cell membrane. It catalyses the reaction heme b + (2E,6E)-farnesyl diphosphate + H2O = Fe(II)-heme o + diphosphate. Its pathway is porphyrin-containing compound metabolism; heme O biosynthesis; heme O from protoheme: step 1/1. Its function is as follows. Converts heme B (protoheme IX) to heme O by substitution of the vinyl group on carbon 2 of heme B porphyrin ring with a hydroxyethyl farnesyl side group. The chain is Protoheme IX farnesyltransferase from Archaeoglobus fulgidus (strain ATCC 49558 / DSM 4304 / JCM 9628 / NBRC 100126 / VC-16).